Here is a 611-residue protein sequence, read N- to C-terminus: Dehydrogenase pkfF (611 aa).

Positions 1–19 (MRHTALLPLVSSFIVPALA) are cleaved as a signal peptide. Residues N28 and N38 are each glycosylated (N-linked (GlcNAc...) asparagine). FAD contacts are provided by residues 50–51 (TS), 71–72 (EA), and 137–140 (HYMV). 6 N-linked (GlcNAc...) asparagine glycosylation sites follow: N180, N187, N240, N272, N409, and N471. H547 acts as the Proton acceptor in catalysis. FAD-binding positions include A581 and 592-593 (PQ).

It belongs to the GMC oxidoreductase family. The cofactor is FAD.

It participates in secondary metabolite biosynthesis. Functionally, dehydrogenase; part of the gene cluster that mediates the biosynthesis of aspernidine A, a prenylated isoindolinone. The starting point of the biosynthesis of aspernidin A is the production of orsellinaldehyde by the non-reducing polyketide synthase pkfA. Hydroxylation, methylation of one of the phenol groups, and prenylation, presumably catalyzed by the prenyltransferase pkfE, would be needed to yield aspernidine D. Subsequently, the cytochrome P450 monooxygenase pkfB is responsible for hydroxylation of aspernidine D to yield aspernidine E. The dehydrogenase pkfF may be responsible for further oxidation of aspernidine E to form a dialdehyde intermediate which is further transformed in a series of steps, some of which are enzyme-mediated, to generate aspernidine A. The possibility that additional enzymes outside of the cluster are involved in aspernidine A biosynthesis cannot be excluded. The sequence is that of Dehydrogenase pkfF from Emericella nidulans (strain FGSC A4 / ATCC 38163 / CBS 112.46 / NRRL 194 / M139) (Aspergillus nidulans).